The sequence spans 157 residues: Transcriptional repressor NrdR (157 aa).

Residues 3–34 (CPFCGHEDTQVKDSRPTDDGTAIRRRRSCTAC) fold into a zinc finger. The 91-residue stretch at 49 to 139 (LIVVKTDQRR…VYRNFSDAGD (91 aa)) folds into the ATP-cone domain.

The protein belongs to the NrdR family. Requires Zn(2+) as cofactor.

Functionally, negatively regulates transcription of bacterial ribonucleotide reductase nrd genes and operons by binding to NrdR-boxes. This Granulibacter bethesdensis (strain ATCC BAA-1260 / CGDNIH1) protein is Transcriptional repressor NrdR.